We begin with the raw amino-acid sequence, 190 residues long: Elongation factor P (190 aa).

The protein belongs to the elongation factor P family.

It localises to the cytoplasm. It participates in protein biosynthesis; polypeptide chain elongation. In terms of biological role, involved in peptide bond synthesis. Stimulates efficient translation and peptide-bond synthesis on native or reconstituted 70S ribosomes in vitro. Probably functions indirectly by altering the affinity of the ribosome for aminoacyl-tRNA, thus increasing their reactivity as acceptors for peptidyl transferase. The protein is Elongation factor P of Bartonella bacilliformis (strain ATCC 35685 / KC583 / Herrer 020/F12,63).